Reading from the N-terminus, the 378-residue chain is Erythronate-4-phosphate dehydrogenase (378 aa).

The substrate site is built by S45 and T66. Residues D146 and T175 each coordinate NAD(+). R208 is an active-site residue. D232 provides a ligand contact to NAD(+). The active site involves E237. Residue H254 is the Proton donor of the active site. G257 contributes to the NAD(+) binding site. Y258 provides a ligand contact to substrate.

It belongs to the D-isomer specific 2-hydroxyacid dehydrogenase family. PdxB subfamily. In terms of assembly, homodimer.

The protein resides in the cytoplasm. The catalysed reaction is 4-phospho-D-erythronate + NAD(+) = (R)-3-hydroxy-2-oxo-4-phosphooxybutanoate + NADH + H(+). It functions in the pathway cofactor biosynthesis; pyridoxine 5'-phosphate biosynthesis; pyridoxine 5'-phosphate from D-erythrose 4-phosphate: step 2/5. In terms of biological role, catalyzes the oxidation of erythronate-4-phosphate to 3-hydroxy-2-oxo-4-phosphonooxybutanoate. The chain is Erythronate-4-phosphate dehydrogenase from Escherichia coli (strain K12 / MC4100 / BW2952).